Consider the following 201-residue polypeptide: Large ribosomal subunit protein uL4 (201 aa).

Residues 45-66 form a disordered region; sequence AQKSRAEVVGSNKKPWRQKGTG.

It belongs to the universal ribosomal protein uL4 family. Part of the 50S ribosomal subunit.

In terms of biological role, one of the primary rRNA binding proteins, this protein initially binds near the 5'-end of the 23S rRNA. It is important during the early stages of 50S assembly. It makes multiple contacts with different domains of the 23S rRNA in the assembled 50S subunit and ribosome. Its function is as follows. Forms part of the polypeptide exit tunnel. The sequence is that of Large ribosomal subunit protein uL4 from Baumannia cicadellinicola subsp. Homalodisca coagulata.